The following is a 307-amino-acid chain: uncharacterized protein (307 aa).

This is an uncharacterized protein from Acidianus hospitalis (AFV-1).